A 101-amino-acid chain; its full sequence is Large ribosomal subunit protein uL23 (101 aa).

This sequence belongs to the universal ribosomal protein uL23 family. As to quaternary structure, part of the 50S ribosomal subunit. Contacts protein L29, and trigger factor when it is bound to the ribosome.

One of the early assembly proteins it binds 23S rRNA. One of the proteins that surrounds the polypeptide exit tunnel on the outside of the ribosome. Forms the main docking site for trigger factor binding to the ribosome. This is Large ribosomal subunit protein uL23 from Kocuria rhizophila (strain ATCC 9341 / DSM 348 / NBRC 103217 / DC2201).